Consider the following 440-residue polypeptide: Xylose isomerase (440 aa).

Catalysis depends on residues H101 and D104. The Mg(2+) site is built by E232, E268, H271, D296, D307, D309, and D339.

It belongs to the xylose isomerase family. Homotetramer. Requires Mg(2+) as cofactor.

Its subcellular location is the cytoplasm. The enzyme catalyses alpha-D-xylose = alpha-D-xylulofuranose. The chain is Xylose isomerase from Escherichia fergusonii (strain ATCC 35469 / DSM 13698 / CCUG 18766 / IAM 14443 / JCM 21226 / LMG 7866 / NBRC 102419 / NCTC 12128 / CDC 0568-73).